We begin with the raw amino-acid sequence, 1435 residues long: Neuropathy target esterase sws (1435 aa).

Over 1–35 (MDVLELLRVSGSNMYYSTFLADAWCYYISNQITMT) the chain is Lumenal. Residues 36–56 (MYLYCALGVLSMLFIGWFVYF) form a helical membrane-spanning segment. Topologically, residues 57–1435 (KRLARLRLRH…NTNNETKNYL (1379 aa)) are cytoplasmic. 176 to 303 (IFGHFEKPIF…IRVIQVIMIR (128 aa)) contributes to the a nucleoside 3',5'-cyclic phosphate binding site. The span at 361–372 (AASGTAGSTHTA) shows a compositional bias: low complexity. Disordered regions lie at residues 361–405 (AASG…ELSG) and 422–452 (NSYP…QPEV). Residues 435 to 449 (GNLSTRRGSITQQEQ) show a composition bias toward polar residues. At Ser443 the chain carries Phosphoserine. A nucleoside 3',5'-cyclic phosphate is bound by residues 474-601 (ELGL…VVRR) and 590-717 (IVLD…LSHR). Positions 944–1110 (LVLGGGGARG…VNNLPGHLWR (167 aa)) constitute a PNPLA domain. A GXGXXG motif is present at residues 948–953 (GGGARG). The short motif at 975–979 (GVSIG) is the GXSXG element. Ser977 functions as the Nucleophile in the catalytic mechanism. The active-site Proton acceptor is the Asp1097. Residues 1097–1099 (DGG) carry the DGA/G motif. A disordered region spans residues 1308–1435 (MDKATQSTPP…NTNNETKNYL (128 aa)). Positions 1311–1322 (ATQSTPPLQSKA) are enriched in polar residues. Composition is skewed to basic and acidic residues over residues 1330-1361 (SKEE…RELS) and 1393-1424 (MDKK…KENR). Positions 1425–1435 (SNTNNETKNYL) are enriched in polar residues.

Belongs to the NTE family. In terms of assembly, interacts with Pka-C3; interaction inhibits the catalytic function of Pka-C3 and the esterase activity of sws.

It localises to the endoplasmic reticulum membrane. It catalyses the reaction a 1-acyl-sn-glycero-3-phosphocholine + H2O = sn-glycerol 3-phosphocholine + a fatty acid + H(+). Functionally, phospholipase B that deacylates intracellular phosphatidylcholine (PtdCho), generating glycerophosphocholine (GroPtdCho). This deacylation occurs at both sn-2 and sn-1 positions of PtdCho. Its specific chemical modification by certain organophosphorus (OP) compounds leads to distal axonopathy. Plays a role in the signaling mechanism between neurons and glia that regulates glia wrapping during development of the adult brain. Essential for membrane lipid homeostasis and cell survival in both neurons and glia of the adult brain. The sequence is that of Neuropathy target esterase sws from Drosophila persimilis (Fruit fly).